The sequence spans 444 residues: Xylose isomerase (444 aa).

Residues His-101 and Asp-104 contribute to the active site. The Mg(2+) site is built by Glu-232, Glu-268, His-271, Asp-296, Asp-307, Asp-309, and Asp-339.

The protein belongs to the xylose isomerase family. Homotetramer. Mg(2+) is required as a cofactor.

Its subcellular location is the cytoplasm. The catalysed reaction is alpha-D-xylose = alpha-D-xylulofuranose. This Thermotoga sp. (strain RQ2) protein is Xylose isomerase.